The following is a 241-amino-acid chain: Golgi-associated RAB2 interactor protein 6 (241 aa).

It belongs to the GARIN family.

The polypeptide is Golgi-associated RAB2 interactor protein 6 (Homo sapiens (Human)).